We begin with the raw amino-acid sequence, 299 residues long: tRNA dimethylallyltransferase (299 aa).

10-17 lines the ATP pocket; it reads GPTAVGKT. 12–17 is a binding site for substrate; sequence TAVGKT. The tract at residues 35–38 is interaction with substrate tRNA; the sequence is DSQQ.

Belongs to the IPP transferase family. As to quaternary structure, monomer. Mg(2+) is required as a cofactor.

The enzyme catalyses adenosine(37) in tRNA + dimethylallyl diphosphate = N(6)-dimethylallyladenosine(37) in tRNA + diphosphate. In terms of biological role, catalyzes the transfer of a dimethylallyl group onto the adenine at position 37 in tRNAs that read codons beginning with uridine, leading to the formation of N6-(dimethylallyl)adenosine (i(6)A). The sequence is that of tRNA dimethylallyltransferase from Streptococcus thermophilus (strain CNRZ 1066).